A 576-amino-acid chain; its full sequence is Lysine--tRNA ligase (576 aa).

The Mg(2+) site is built by glutamate 412 and glutamate 419.

Belongs to the class-II aminoacyl-tRNA synthetase family. Homodimer. Requires Mg(2+) as cofactor.

Its subcellular location is the cytoplasm. It carries out the reaction tRNA(Lys) + L-lysine + ATP = L-lysyl-tRNA(Lys) + AMP + diphosphate. In Phocaeicola vulgatus (strain ATCC 8482 / DSM 1447 / JCM 5826 / CCUG 4940 / NBRC 14291 / NCTC 11154) (Bacteroides vulgatus), this protein is Lysine--tRNA ligase.